The following is a 614-amino-acid chain: Pyruvate decarboxylase 2 (614 aa).

2 residues coordinate substrate: Asp50 and His137. The segment at 415–523 (DSWFNCQKLK…FLINNGGYTI (109 aa)) is thiamine pyrophosphate binding. Mg(2+) contacts are provided by Asp491, Asn518, and Gly520. Glu524 contributes to the substrate binding site.

It belongs to the TPP enzyme family. In terms of assembly, homotetramer. It depends on a metal cation as a cofactor. The cofactor is thiamine diphosphate. As to expression, pollen.

It catalyses the reaction a 2-oxocarboxylate + H(+) = an aldehyde + CO2. In Nicotiana tabacum (Common tobacco), this protein is Pyruvate decarboxylase 2 (PDC2).